A 273-amino-acid chain; its full sequence is Inositol monophosphatase 1 (273 aa).

Glu-71, Asp-91, Val-93, and Asp-94 together coordinate Mg(2+). Glu-71 contacts substrate. Substrate is bound by residues 93–96, 194–196, and Asp-221; these read VDGT and GSC. Asp-221 is a binding site for Mg(2+).

Belongs to the inositol monophosphatase superfamily. Mg(2+) is required as a cofactor. In terms of tissue distribution, expressed in seedlings, flowers, young and matures green fruits. Detected in roots and stems.

The enzyme catalyses a myo-inositol phosphate + H2O = myo-inositol + phosphate. It participates in polyol metabolism; myo-inositol biosynthesis; myo-inositol from D-glucose 6-phosphate: step 2/2. Responsible for the provision of inositol required for synthesis of phosphatidylinositol and polyphosphoinositides. This is Inositol monophosphatase 1 (IMP1) from Solanum lycopersicum (Tomato).